The following is a 341-amino-acid chain: Glyceraldehyde-3-phosphate dehydrogenase 2 (341 aa).

Residues 13 to 14, Asp35, and Arg85 each bind NAD(+); that span reads RI. Residues 157 to 159, Thr188, 217 to 218, and Arg240 contribute to the D-glyceraldehyde 3-phosphate site; these read SCT and TG. Cys158 functions as the Nucleophile in the catalytic mechanism. Asn322 is an NAD(+) binding site.

Belongs to the glyceraldehyde-3-phosphate dehydrogenase family. As to quaternary structure, homotetramer.

The protein resides in the cytoplasm. It catalyses the reaction D-glyceraldehyde 3-phosphate + phosphate + NAD(+) = (2R)-3-phospho-glyceroyl phosphate + NADH + H(+). The protein operates within carbohydrate degradation; glycolysis; pyruvate from D-glyceraldehyde 3-phosphate: step 1/5. This chain is Glyceraldehyde-3-phosphate dehydrogenase 2 (gpd-2), found in Caenorhabditis elegans.